We begin with the raw amino-acid sequence, 55 residues long: Large ribosomal subunit protein bL33 (55 aa).

Belongs to the bacterial ribosomal protein bL33 family.

The polypeptide is Large ribosomal subunit protein bL33 (Bifidobacterium longum (strain DJO10A)).